Here is an 835-residue protein sequence, read N- to C-terminus: Protein translocase subunit SecA (835 aa).

ATP is bound by residues Q85, 103–107 (GEGKT), and D492. 4 residues coordinate Zn(2+): C819, C821, C830, and C831.

Belongs to the SecA family. Monomer and homodimer. Part of the essential Sec protein translocation apparatus which comprises SecA, SecYEG and auxiliary proteins SecDF. Other proteins may also be involved. Requires Zn(2+) as cofactor.

It localises to the cell membrane. It is found in the cytoplasm. The enzyme catalyses ATP + H2O + cellular proteinSide 1 = ADP + phosphate + cellular proteinSide 2.. Functionally, part of the Sec protein translocase complex. Interacts with the SecYEG preprotein conducting channel. Has a central role in coupling the hydrolysis of ATP to the transfer of proteins into and across the cell membrane, serving as an ATP-driven molecular motor driving the stepwise translocation of polypeptide chains across the membrane. This chain is Protein translocase subunit SecA, found in Clostridium botulinum (strain Okra / Type B1).